The primary structure comprises 150 residues: 3-dehydroquinate dehydratase (150 aa).

Tyr26 (proton acceptor) is an active-site residue. Residues Asn77, His83, and Asp90 each contribute to the substrate site. The Proton donor role is filled by His103. Substrate contacts are provided by residues 104–105 and Arg114; that span reads LS.

The protein belongs to the type-II 3-dehydroquinase family. Homododecamer.

The catalysed reaction is 3-dehydroquinate = 3-dehydroshikimate + H2O. The protein operates within metabolic intermediate biosynthesis; chorismate biosynthesis; chorismate from D-erythrose 4-phosphate and phosphoenolpyruvate: step 3/7. In terms of biological role, catalyzes a trans-dehydration via an enolate intermediate. The chain is 3-dehydroquinate dehydratase from Mannheimia succiniciproducens (strain KCTC 0769BP / MBEL55E).